The following is a 168-amino-acid chain: Phosphopantetheine adenylyltransferase (168 aa).

Residue threonine 13 participates in substrate binding. ATP is bound by residues 13 to 14 (TF) and histidine 21. Substrate contacts are provided by lysine 45, leucine 78, and arginine 92. Residues 93-95 (GLR), glutamate 103, and 128-134 (TQFISSS) contribute to the ATP site.

It belongs to the bacterial CoaD family. Homohexamer. It depends on Mg(2+) as a cofactor.

Its subcellular location is the cytoplasm. The enzyme catalyses (R)-4'-phosphopantetheine + ATP + H(+) = 3'-dephospho-CoA + diphosphate. The protein operates within cofactor biosynthesis; coenzyme A biosynthesis; CoA from (R)-pantothenate: step 4/5. Its function is as follows. Reversibly transfers an adenylyl group from ATP to 4'-phosphopantetheine, yielding dephospho-CoA (dPCoA) and pyrophosphate. This Wolbachia pipientis wMel protein is Phosphopantetheine adenylyltransferase.